A 299-amino-acid chain; its full sequence is 4-diphosphocytidyl-2-C-methyl-D-erythritol kinase (299 aa).

K19 is a catalytic residue. Residue 110–120 (PVASGIGGGSA) participates in ATP binding. D152 is a catalytic residue.

The protein belongs to the GHMP kinase family. IspE subfamily.

The enzyme catalyses 4-CDP-2-C-methyl-D-erythritol + ATP = 4-CDP-2-C-methyl-D-erythritol 2-phosphate + ADP + H(+). It participates in isoprenoid biosynthesis; isopentenyl diphosphate biosynthesis via DXP pathway; isopentenyl diphosphate from 1-deoxy-D-xylulose 5-phosphate: step 3/6. Functionally, catalyzes the phosphorylation of the position 2 hydroxy group of 4-diphosphocytidyl-2C-methyl-D-erythritol. In Agrobacterium fabrum (strain C58 / ATCC 33970) (Agrobacterium tumefaciens (strain C58)), this protein is 4-diphosphocytidyl-2-C-methyl-D-erythritol kinase.